The sequence spans 165 residues: Protein C2-DOMAIN ABA-RELATED 7 (165 aa).

Methionine 1 bears the N-acetylmethionine mark. The 106-residue stretch at methionine 1 to aspartate 106 folds into the C2 domain. Positions 21, 22, 27, 73, 74, 75, and 81 each coordinate Ca(2+).

Belongs to the plant CAR protein family. In terms of assembly, binds to PYR/PYL/RCAR abscisic acid intracellular receptors in an ABA-independent manner, both at the plasma membrane and in the nucleus.

Its subcellular location is the cell membrane. It is found in the nucleus. Functionally, stimulates the GTPase/ATPase activities of Obg-like ATPases. Mediates the transient calcium-dependent interaction of PYR/PYL/RCAR abscisic acid (ABA) receptors with the plasma membrane and thus regulates ABA sensitivity. The chain is Protein C2-DOMAIN ABA-RELATED 7 from Arabidopsis thaliana (Mouse-ear cress).